A 203-amino-acid chain; its full sequence is Outer-membrane lipoprotein LolB (203 aa).

Residues 1–18 (MYRLLCLLALLTAAGLMG) form the signal peptide. C19 is lipidated: N-palmitoyl cysteine. C19 carries the S-diacylglycerol cysteine lipid modification.

Belongs to the LolB family. Monomer.

Its subcellular location is the cell outer membrane. Its function is as follows. Plays a critical role in the incorporation of lipoproteins in the outer membrane after they are released by the LolA protein. This is Outer-membrane lipoprotein LolB from Cellvibrio japonicus (strain Ueda107) (Pseudomonas fluorescens subsp. cellulosa).